The sequence spans 443 residues: Phosphoglucosamine mutase (443 aa).

Ser102 functions as the Phosphoserine intermediate in the catalytic mechanism. Mg(2+) is bound by residues Ser102, Asp241, Asp243, and Asp245. Ser102 carries the post-translational modification Phosphoserine.

This sequence belongs to the phosphohexose mutase family. Mg(2+) is required as a cofactor. In terms of processing, activated by phosphorylation.

The catalysed reaction is alpha-D-glucosamine 1-phosphate = D-glucosamine 6-phosphate. In terms of biological role, catalyzes the conversion of glucosamine-6-phosphate to glucosamine-1-phosphate. The sequence is that of Phosphoglucosamine mutase from Polaromonas sp. (strain JS666 / ATCC BAA-500).